Reading from the N-terminus, the 752-residue chain is Photosystem I P700 chlorophyll a apoprotein A1 (752 aa).

The next 8 helical transmembrane spans lie at 73 to 96, 159 to 182, 198 to 222, 294 to 312, 349 to 372, 388 to 414, 436 to 458, and 533 to 551; these read IFSA…FHGA, LYAT…FHYH, MNHH…HISI, TAHH…GHMY, WHAQ…HHMY, LSLF…IFMV, AIIS…LYIH, and FMVH…LILV. [4Fe-4S] cluster contacts are provided by Cys-575 and Cys-584. The next 2 helical transmembrane spans lie at 591–612 and 666–688; these read HVFL…HFSW and LSAY…MFLF. His-677 provides a ligand contact to chlorophyll a'. Residues Met-685 and Tyr-693 each coordinate chlorophyll a. Trp-694 is a binding site for phylloquinone. The chain crosses the membrane as a helical span at residues 726-746; it reads AVGVAHYLLGGIGTTWAFFLA.

Belongs to the PsaA/PsaB family. As to quaternary structure, the PsaA/B heterodimer binds the P700 chlorophyll special pair and subsequent electron acceptors. PSI consists of a core antenna complex that captures photons, and an electron transfer chain that converts photonic excitation into a charge separation. The eukaryotic PSI reaction center is composed of at least 11 subunits. It depends on P700 is a chlorophyll a/chlorophyll a' dimer, A0 is one or more chlorophyll a, A1 is one or both phylloquinones and FX is a shared 4Fe-4S iron-sulfur center. as a cofactor.

Its subcellular location is the plastid. It localises to the chloroplast thylakoid membrane. It carries out the reaction reduced [plastocyanin] + hnu + oxidized [2Fe-2S]-[ferredoxin] = oxidized [plastocyanin] + reduced [2Fe-2S]-[ferredoxin]. Its function is as follows. PsaA and PsaB bind P700, the primary electron donor of photosystem I (PSI), as well as the electron acceptors A0, A1 and FX. PSI is a plastocyanin/cytochrome c6-ferredoxin oxidoreductase, converting photonic excitation into a charge separation, which transfers an electron from the donor P700 chlorophyll pair to the spectroscopically characterized acceptors A0, A1, FX, FA and FB in turn. Oxidized P700 is reduced on the lumenal side of the thylakoid membrane by plastocyanin or cytochrome c6. The polypeptide is Photosystem I P700 chlorophyll a apoprotein A1 (Gracilaria tenuistipitata var. liui (Red alga)).